We begin with the raw amino-acid sequence, 258 residues long: Regulatory protein RecX (258 aa).

The protein belongs to the RecX family.

The protein resides in the cytoplasm. Modulates RecA activity. This chain is Regulatory protein RecX, found in Streptococcus pyogenes serotype M12 (strain MGAS2096).